A 259-amino-acid polypeptide reads, in one-letter code: Protein snail homolog Sna (259 aa).

The SNAG domain stretch occupies residues 1–20 (MPRSFLVKKHFSASKKPNYS). The segment at 71–113 (DYKKSPISPSSSDDSSKPLDLTSFSSEDEGGKTSDPPSPASSA) is disordered. C2H2-type zinc fingers lie at residues 119 to 141 (FQCNLCSKSYSTFAGLSKHKQLH), 150 to 172 (FSCKYCEKEYVSLGALKMHIRSH), 176 to 198 (CVCKICGKAFSRPWLLQGHIRTH), 204 to 226 (FSCTHCNRAFADRSNLRAHLQTH), and 232 to 255 (YQCKSCSRTFSRMSLLHKHEETGC).

The protein belongs to the snail C2H2-type zinc-finger protein family. In terms of assembly, interacts (via SNAG domain) with limd1 (via LIM domains), wtip (via LIM domains) and ajuba (via LIM domains). Interacts with elp3; the interaction inhibits snai1 ubiquitination and promotes snai1 stability. In terms of processing, ubiquitinated. As to expression, maternal expression is nearly completely restricted to the vegetal hemisphere. Zygotic expression begins in the dorsal marginal zone just before gastrulation (stage 9), and is almost completely absent in the animal hemisphere. At mid-gastrula (stage 11-11.5), expression begins in the ectoderm in an arc surrounding the prospective neural plate. From stage 12, anterior expression is down-regulated, while levels are increased in the prospective neural crest.

Its subcellular location is the nucleus. Transcriptional repressor. Acts upstream of snai2/slug, zic5 and other neural crest markers in the specification of the neural crest and neural crest migration. Involved in embryonic mesoderm formation. This chain is Protein snail homolog Sna (snai1), found in Xenopus laevis (African clawed frog).